The sequence spans 266 residues: Putative pyruvate, phosphate dikinase regulatory protein (266 aa).

An ADP-binding site is contributed by 149-156; the sequence is GVSRTSKT.

The protein belongs to the pyruvate, phosphate/water dikinase regulatory protein family. PDRP subfamily.

It carries out the reaction N(tele)-phospho-L-histidyl/L-threonyl-[pyruvate, phosphate dikinase] + ADP = N(tele)-phospho-L-histidyl/O-phospho-L-threonyl-[pyruvate, phosphate dikinase] + AMP + H(+). The catalysed reaction is N(tele)-phospho-L-histidyl/O-phospho-L-threonyl-[pyruvate, phosphate dikinase] + phosphate + H(+) = N(tele)-phospho-L-histidyl/L-threonyl-[pyruvate, phosphate dikinase] + diphosphate. Bifunctional serine/threonine kinase and phosphorylase involved in the regulation of the pyruvate, phosphate dikinase (PPDK) by catalyzing its phosphorylation/dephosphorylation. In Halothermothrix orenii (strain H 168 / OCM 544 / DSM 9562), this protein is Putative pyruvate, phosphate dikinase regulatory protein.